Reading from the N-terminus, the 777-residue chain is Transcriptional regulator QRICH1 (777 aa).

Position 1 is an N-acetylmethionine (methionine 1). The CARD domain maps to 6-48 (ENTISFEEYIRVKARSVPQHRMKEFLDSLASKGPEALQEFQQT). Disordered regions lie at residues 140–164 (IQGQ…SPSQ) and 219–240 (ALSP…VGTA). Phosphoserine is present on serine 346. Residues lysine 354 and lysine 359 each participate in a glycyl lysine isopeptide (Lys-Gly) (interchain with G-Cter in SUMO2) cross-link. Positions 420 to 440 (QQQPQQQTAQEQTPPPQQQQQ) are disordered. Serine 465 is modified (phosphoserine).

In terms of tissue distribution, expressed highly in prefrontal cortex, craniofacial area and near the limbs of mouse embryos. Expressed in heart, skeletal muscle, liver, kidney, lung, brain, spleen, intestine and growth plate in mice.

It is found in the nucleus. It localises to the cytoplasm. The protein resides in the cell membrane. Functionally, transcriptional regulator that acts as a mediator of the integrated stress response (ISR) through transcriptional control of protein homeostasis under conditions of ER stress. Controls the outcome of the unfolded protein response (UPR), an ER-stress response pathway that either promotes recovery of ER homeostasis and cell survival, or triggers the terminal UPR which elicits programmed cell death when ER stress is prolonged and unresolved. ER stress induces QRICH1 translation by a ribosome translation re-initiation mechanism in response to EIF2S1/eIF-2-alpha phosphorylation, and stress-induced QRICH1 regulates a transcriptional program associated with protein translation, protein secretion-mediated proteotoxicity and cell death during the terminal UPR. May cooperate with ATF4 transcription factor signaling to regulate ER homeostasis which is critical for cell viability. Up-regulates CASP3/caspase-3 activity in epithelial cells under ER stress. Central regulator of proteotoxicity associated with ER stress-mediated inflammatory diseases in the intestines and liver. Involved in chondrocyte hypertrophy, a process required for normal longitudinal bone growth. This is Transcriptional regulator QRICH1 from Mus musculus (Mouse).